Reading from the N-terminus, the 249-residue chain is NADH-quinone oxidoreductase subunit C (249 aa).

It belongs to the complex I 30 kDa subunit family. In terms of assembly, NDH-1 is composed of 14 different subunits. Subunits NuoB, C, D, E, F, and G constitute the peripheral sector of the complex.

The protein localises to the cell inner membrane. The enzyme catalyses a quinone + NADH + 5 H(+)(in) = a quinol + NAD(+) + 4 H(+)(out). Functionally, NDH-1 shuttles electrons from NADH, via FMN and iron-sulfur (Fe-S) centers, to quinones in the respiratory chain. The immediate electron acceptor for the enzyme in this species is believed to be ubiquinone. Couples the redox reaction to proton translocation (for every two electrons transferred, four hydrogen ions are translocated across the cytoplasmic membrane), and thus conserves the redox energy in a proton gradient. This Stenotrophomonas maltophilia (strain R551-3) protein is NADH-quinone oxidoreductase subunit C.